The following is a 744-amino-acid chain: Glucosamine inositolphosphorylceramide transferase 1 (744 aa).

Helical transmembrane passes span 31 to 51 (FLVA…WLVV), 378 to 398 (SLFG…VGFV), and 460 to 480 (LFFC…VHFL). Substrate contacts are provided by residues Asn534, 558–563 (NSLNNR), 579–581 (DDD), Arg609, and 665–669 (FNCED). Asp581 is a binding site for Mn(2+). A disulfide bond links Cys667 and Cys718. Residue Asp669 is part of the active site.

Belongs to the glycosyltransferase 64 family. The cofactor is Mn(2+).

The protein localises to the membrane. The protein operates within sphingolipid metabolism. Functionally, essential protein. Glycosyltransferase that mediates the glycosylation of glycosylinositol phosphorylceramides (GIPCs), the major sphingolipids in the plasma membrane; acts as a HexN(Ac)-specific GIPC sugar transferase. Responsible for the glycosylation of a subgroup of GIPCs found in seeds and pollen that contain GlcNAc and GlcN (GlcN(Ac)). Maybe involved in the maintenance of cell-cell adhesion. In Oryza sativa subsp. indica (Rice), this protein is Glucosamine inositolphosphorylceramide transferase 1.